We begin with the raw amino-acid sequence, 557 residues long: Organic cation/carnitine transporter 2 (557 aa).

The Cytoplasmic segment spans residues 1 to 20; that stretch reads MRDYDEVTAFLGEWGPFQRL. The helical transmembrane segment at 21–41 threads the bilayer; sequence IFFLLSASIIPNGFNGMSIVF. Topologically, residues 42 to 142 are extracellular; sequence LAGTPEHRCL…DLVCKDDWKA (101 aa). N-linked (GlcNAc...) asparagine glycosylation is found at Asn-57, Asn-64, and Asn-91. Residues 143-163 form a helical membrane-spanning segment; that stretch reads PLTTSLFFVGVLMGSFISGQL. Residues 164-172 are Cytoplasmic-facing; sequence SDRFGRKNV. The helical transmembrane segment at 173–193 threads the bilayer; the sequence is LFLTMGMQTGFSFLQLFSVNF. Topologically, residues 194–197 are extracellular; the sequence is EMFT. A helical membrane pass occupies residues 198–218; the sequence is VLFVLVGMGQISNYVAAFVLG. ATP is bound at residue 218-225; it reads GTEILSKS. At 219–232 the chain is on the cytoplasmic side; that stretch reads TEILSKSIRIIFAT. A helical transmembrane segment spans residues 233–253; sequence LGVCIFYAFGFMVLPLFAYFI. Residues 254-257 are Extracellular-facing; the sequence is RDWR. The helical transmembrane segment at 258–278 threads the bilayer; sequence MLLLALTVPGVLCGALWWFIP. The Cytoplasmic segment spans residues 279-341; the sequence is ESPRWLISQG…YDLVRTRNIR (63 aa). A helical transmembrane segment spans residues 342 to 362; that stretch reads IITIMSIILWLTISVGYFGLS. Residues 363 to 373 are Extracellular-facing; sequence LDTPNLHGDIY. Residues 374–394 traverse the membrane as a helical segment; sequence VNCFLLAAVEVPAYVLAWLLL. The Cytoplasmic portion of the chain corresponds to 395-406; it reads QHLPRRYSISAA. Residues 407–427 traverse the membrane as a helical segment; it reads LFLGGSVLLFIQLVPSELFYL. The Extracellular segment spans residues 428 to 430; the sequence is STA. Residues 431–451 traverse the membrane as a helical segment; that stretch reads LVMVGKFGITSAYSMVYVYTA. Topologically, residues 452–462 are cytoplasmic; the sequence is ELYPTVVRNMG. The helical transmembrane segment at 463–483 threads the bilayer; the sequence is VGVSSTASRLGSILSPYFVYL. The Extracellular portion of the chain corresponds to 484-488; sequence GAYDR. A Phosphotyrosine modification is found at Tyr-486. The chain crosses the membrane as a helical span at residues 489 to 509; it reads FLPYILMGSLTILTAILTLFF. The Cytoplasmic segment spans residues 510–557; sequence PESFGAPLPDTIDQMLRVKGIKQWQIQSQTRTQKDGGESPTVLKSTAF. The tract at residues 537–557 is disordered; sequence SQTRTQKDGGESPTVLKSTAF. The residue at position 548 (Ser-548) is a Phosphoserine. Phosphothreonine is present on Thr-550.

It belongs to the major facilitator (TC 2.A.1) superfamily. Organic cation transporter (TC 2.A.1.19) family. As to quaternary structure, interacts with PDZK1. In terms of tissue distribution, expressed in the proximal and distal tubules and in the glomeruli in the kidney, in the myocardium, valves, and arterioles in the heart, in the labyrinthine layer of the placenta, and in the cortex, hippocampus, and cerebellum in the brain. Expressed in Sertoli cells in testis.

The protein resides in the cell membrane. It is found in the apical cell membrane. Its subcellular location is the basal cell membrane. The catalysed reaction is (R)-carnitine(out) + Na(+)(out) = (R)-carnitine(in) + Na(+)(in). It carries out the reaction O-acetyl-(R)-carnitine(out) + Na(+)(out) = O-acetyl-(R)-carnitine(in) + Na(+)(in). It catalyses the reaction O-propanoyl-(R)-carnitine(out) + Na(+)(out) = O-propanoyl-(R)-carnitine(in) + Na(+)(in). The enzyme catalyses glycine betaine(out) + Na(+)(out) = glycine betaine(in) + Na(+)(in). The catalysed reaction is glycine betaine(out) + (R)-carnitine(in) = glycine betaine(in) + (R)-carnitine(out). It carries out the reaction O-butanoyl-(R)-carnitine(out) + Na(+)(out) = O-butanoyl-(R)-carnitine(in) + Na(+)(in). It catalyses the reaction (S)-carnitine(out) + Na(+)(out) = (S)-carnitine(in) + Na(+)(in). The enzyme catalyses an O-acyl-(R)-carnitine(out) + Na(+)(out) = an O-acyl-(R)-carnitine(in) + Na(+)(in). The catalysed reaction is L-glutamyl-L-arginyl-glycyl-L-methionyl-L-threonine(out) + Na(+)(out) = L-glutamyl-L-arginyl-glycyl-L-methionyl-L-threonine(in) + Na(+)(in). It carries out the reaction N,N-dimethylglycine(out) + Na(+)(out) = N,N-dimethylglycine(in) + Na(+)(in). Its activity is regulated as follows. Inhibited by emetine, quinidine and verapamil. The IC(50) of emetine is 4.2 uM. Not inhibited by valproic acid. Transport of (R)-carnitine is stimulated by cholesterol in the plasma membrane. Functionally, sodium-ion dependent, high affinity carnitine transporter. Involved in the active cellular uptake of carnitine. Transports one sodium ion with one molecule of carnitine. Also transports organic cations such as tetraethylammonium (TEA) without the involvement of sodium. Also relative uptake activity ratio of carnitine to TEA is 11.3. May also contribute to regulate the transport of organic compounds in testis across the blood-testis-barrier. The chain is Organic cation/carnitine transporter 2 (Slc22a5) from Rattus norvegicus (Rat).